The chain runs to 244 residues: 14-3-3 protein beta/alpha-A (244 aa).

Met1 bears the N-acetylmethionine mark.

Belongs to the 14-3-3 family. Homodimer, and heterodimer with other family members.

The protein localises to the cytoplasm. Functionally, adapter protein implicated in the regulation of a large spectrum of both general and specialized signaling pathways. Binds to a large number of partners, usually by recognition of a phosphoserine or phosphothreonine motif. Binding generally results in the modulation of the activity of the binding partner. The protein is 14-3-3 protein beta/alpha-A (ywhab-a) of Xenopus laevis (African clawed frog).